The following is a 723-amino-acid chain: Malate synthase G (723 aa).

Acetyl-CoA-binding positions include valine 118, 125–126, serine 274, and arginine 311; that span reads RY. Arginine 338 functions as the Proton acceptor in the catalytic mechanism. Glyoxylate-binding positions include arginine 338, glutamate 427, and 452 to 455; that span reads GFLD. Glutamate 427 and aspartate 455 together coordinate Mg(2+). Proline 536 lines the acetyl-CoA pocket. Cysteine 617 carries the cysteine sulfenic acid (-SOH) modification. Aspartate 631 functions as the Proton donor in the catalytic mechanism. Cysteine 688 is subject to Cysteine sulfenic acid (-SOH).

The protein belongs to the malate synthase family. GlcB subfamily. As to quaternary structure, monomer. The cofactor is Mg(2+).

Its subcellular location is the cytoplasm. It catalyses the reaction glyoxylate + acetyl-CoA + H2O = (S)-malate + CoA + H(+). It functions in the pathway carbohydrate metabolism; glyoxylate cycle; (S)-malate from isocitrate: step 2/2. In terms of biological role, involved in the glycolate utilization. Catalyzes the condensation and subsequent hydrolysis of acetyl-coenzyme A (acetyl-CoA) and glyoxylate to form malate and CoA. The sequence is that of Malate synthase G from Escherichia coli O6:H1 (strain CFT073 / ATCC 700928 / UPEC).